The primary structure comprises 239 residues: 1-(5-phosphoribosyl)-5-[(5-phosphoribosylamino)methylideneamino] imidazole-4-carboxamide isomerase (239 aa).

The Proton acceptor role is filled by Asp8. The active-site Proton donor is the Asp129.

The protein belongs to the HisA/HisF family.

Its subcellular location is the cytoplasm. It carries out the reaction 1-(5-phospho-beta-D-ribosyl)-5-[(5-phospho-beta-D-ribosylamino)methylideneamino]imidazole-4-carboxamide = 5-[(5-phospho-1-deoxy-D-ribulos-1-ylimino)methylamino]-1-(5-phospho-beta-D-ribosyl)imidazole-4-carboxamide. It functions in the pathway amino-acid biosynthesis; L-histidine biosynthesis; L-histidine from 5-phospho-alpha-D-ribose 1-diphosphate: step 4/9. This Cereibacter sphaeroides (strain ATCC 17025 / ATH 2.4.3) (Rhodobacter sphaeroides) protein is 1-(5-phosphoribosyl)-5-[(5-phosphoribosylamino)methylideneamino] imidazole-4-carboxamide isomerase.